We begin with the raw amino-acid sequence, 416 residues long: Serine hydroxymethyltransferase (416 aa).

(6S)-5,6,7,8-tetrahydrofolate-binding positions include Leu119 and 123–125; that span reads GHL. Lys228 carries the N6-(pyridoxal phosphate)lysine modification.

The protein belongs to the SHMT family. As to quaternary structure, homodimer. Requires pyridoxal 5'-phosphate as cofactor.

The protein localises to the cytoplasm. The catalysed reaction is (6R)-5,10-methylene-5,6,7,8-tetrahydrofolate + glycine + H2O = (6S)-5,6,7,8-tetrahydrofolate + L-serine. Its pathway is one-carbon metabolism; tetrahydrofolate interconversion. It participates in amino-acid biosynthesis; glycine biosynthesis; glycine from L-serine: step 1/1. Its function is as follows. Catalyzes the reversible interconversion of serine and glycine with tetrahydrofolate (THF) serving as the one-carbon carrier. This reaction serves as the major source of one-carbon groups required for the biosynthesis of purines, thymidylate, methionine, and other important biomolecules. Also exhibits THF-independent aldolase activity toward beta-hydroxyamino acids, producing glycine and aldehydes, via a retro-aldol mechanism. This Moorella thermoacetica (strain ATCC 39073 / JCM 9320) protein is Serine hydroxymethyltransferase.